The chain runs to 1043 residues: NACHT, LRR and PYD domains-containing protein 13 (1043 aa).

Residues methionine 1–glutamate 107 form the Pyrin domain. The NACHT domain occupies glutamine 229 to proline 558. Residue glycine 235–threonine 242 coordinates ATP. 7 LRR repeats span residues asparagine 725 to alanine 749, asparagine 781 to alanine 804, isoleucine 837 to histidine 864, asparagine 894 to glutamate 917, aspartate 923 to asparagine 946, asparagine 951 to proline 978, and serine 1007 to lysine 1030.

The protein belongs to the NLRP family.

Involved in inflammation. The polypeptide is NACHT, LRR and PYD domains-containing protein 13 (NLRP13) (Homo sapiens (Human)).